The sequence spans 176 residues: Disulfide bond formation protein B (176 aa).

Residues M1–Q11 lie on the Cytoplasmic side of the membrane. A helical membrane pass occupies residues V12–F28. Over L29–I46 the chain is Periplasmic. C38 and C41 are joined by a disulfide. A helical membrane pass occupies residues G47–P63. Residues K64 to L70 lie on the Cytoplasmic side of the membrane. The helical transmembrane segment at L71–G88 threads the bilayer. At R89–E145 the chain is on the periplasmic side. A disulfide bridge links C104 with C131. A helical transmembrane segment spans residues Q146 to R164. At I165–R176 the chain is on the cytoplasmic side.

It belongs to the DsbB family.

Its subcellular location is the cell inner membrane. Required for disulfide bond formation in some periplasmic proteins. Acts by oxidizing the DsbA protein. This is Disulfide bond formation protein B from Psychrobacter arcticus (strain DSM 17307 / VKM B-2377 / 273-4).